A 463-amino-acid polypeptide reads, in one-letter code: O-phospho-L-seryl-tRNA:Cys-tRNA synthase 2 (463 aa).

Residues 154–155 (AR), N259, and 282–284 (SGH) each bind pyridoxal 5'-phosphate. K285 is subject to N6-(pyridoxal phosphate)lysine.

It belongs to the SepCysS family. Homodimer. Interacts with SepRS. It depends on pyridoxal 5'-phosphate as a cofactor.

It carries out the reaction O-phospho-L-seryl-tRNA(Cys) + hydrogen sulfide + H(+) = L-cysteinyl-tRNA(Cys) + phosphate. Its function is as follows. Converts O-phospho-L-seryl-tRNA(Cys) (Sep-tRNA(Cys)) to L-cysteinyl-tRNA(Cys) (Cys-tRNA(Cys)). The polypeptide is O-phospho-L-seryl-tRNA:Cys-tRNA synthase 2 (Methanocella arvoryzae (strain DSM 22066 / NBRC 105507 / MRE50)).